A 273-amino-acid polypeptide reads, in one-letter code: Putative phosphoenolpyruvate synthase regulatory protein (273 aa).

Position 153-160 (Gly153–Thr160) interacts with ADP.

This sequence belongs to the pyruvate, phosphate/water dikinase regulatory protein family. PSRP subfamily.

It carries out the reaction [pyruvate, water dikinase] + ADP = [pyruvate, water dikinase]-phosphate + AMP + H(+). The enzyme catalyses [pyruvate, water dikinase]-phosphate + phosphate + H(+) = [pyruvate, water dikinase] + diphosphate. Functionally, bifunctional serine/threonine kinase and phosphorylase involved in the regulation of the phosphoenolpyruvate synthase (PEPS) by catalyzing its phosphorylation/dephosphorylation. This Delftia acidovorans (strain DSM 14801 / SPH-1) protein is Putative phosphoenolpyruvate synthase regulatory protein.